The chain runs to 280 residues: MSGVTTVEYRGRVAVITICNERKLNALDLHGYYELSERMREVATHDEVYVTLLTAKGRFFSAGADVSTIRDPPTTGEDDSGIADGGRRQWLQSFVAFNLNITQAFYSHPKILVVGLNGPVVGLSAALVSFADFIYATPSTFLLTPFSSLGLVAEGGASRALVQRLGVSKANEALLMSRRVPADELLQTGFVNKVFTELKGAKDDDVRFKELVLAEIDDKLGDHLVGDSLIGIKELIRRPEIDVLEGQNAREVFAGLGRFMSGVPQREFLKLASGEKRHKL.

Catalysis depends on glutamate 154, which acts as the Proton donor/acceptor. The short motif at 278 to 280 (HKL) is the Peroxisome targeting signal (PTS1) element.

This sequence belongs to the enoyl-CoA hydratase/isomerase family.

It localises to the cytoplasm. The protein resides in the cytosol. The protein localises to the peroxisome. It catalyses the reaction a (3E,5Z)-dienoyl-CoA = a (2E,4E)-(5,6-saturated)-dienoyl-CoA. It functions in the pathway lipid metabolism; fatty acid beta-oxidation. Its function is as follows. Peroxisomal di-isomerase that is involved in fatty acid metabolism enzyme by converting 3,5-dienoyl-CoAs to the corresponding 2,4-dienoyl-CoAs. Involved in fatty acid beta-oxidation, which is important for lipid droplets degradation and infectious growth. The chain is Delta(3,5)-Delta(2,4)-dienoyl-CoA isomerase from Pyricularia oryzae (strain 70-15 / ATCC MYA-4617 / FGSC 8958) (Rice blast fungus).